The primary structure comprises 296 residues: 33 kDa chaperonin (296 aa).

Disulfide bonds link Cys-236–Cys-238 and Cys-269–Cys-272.

The protein belongs to the HSP33 family. In terms of processing, under oxidizing conditions two disulfide bonds are formed involving the reactive cysteines. Under reducing conditions zinc is bound to the reactive cysteines and the protein is inactive.

It localises to the cytoplasm. Functionally, redox regulated molecular chaperone. Protects both thermally unfolding and oxidatively damaged proteins from irreversible aggregation. Plays an important role in the bacterial defense system toward oxidative stress. The polypeptide is 33 kDa chaperonin (Lactobacillus acidophilus (strain ATCC 700396 / NCK56 / N2 / NCFM)).